A 457-amino-acid polypeptide reads, in one-letter code: Argininosuccinate lyase (457 aa).

This sequence belongs to the lyase 1 family. Argininosuccinate lyase subfamily.

Its subcellular location is the cytoplasm. The enzyme catalyses 2-(N(omega)-L-arginino)succinate = fumarate + L-arginine. Its pathway is amino-acid biosynthesis; L-arginine biosynthesis; L-arginine from L-ornithine and carbamoyl phosphate: step 3/3. This chain is Argininosuccinate lyase, found in Pectobacterium carotovorum subsp. carotovorum (strain PC1).